The primary structure comprises 106 residues: Cell division topological specificity factor (106 aa).

It belongs to the MinE family.

Prevents the cell division inhibition by proteins MinC and MinD at internal division sites while permitting inhibition at polar sites. This ensures cell division at the proper site by restricting the formation of a division septum at the midpoint of the long axis of the cell. This Prochlorococcus marinus (strain SARG / CCMP1375 / SS120) protein is Cell division topological specificity factor.